Reading from the N-terminus, the 89-residue chain is uncharacterized protein (89 aa).

Basic residues-rich tracts occupy residues 1 to 17 (MPPHGHHHHHHGHHGHH) and 65 to 89 (HHGHHHHHGHHGHHDHHHHGHHGHH). Disordered regions lie at residues 1–25 (MPPHGHHHHHHGHHGHHEHITITPV) and 60–89 (LETGHHHGHHHHHGHHGHHDHHHHGHHGHH).

This is an uncharacterized protein from Dictyostelium discoideum (Social amoeba).